Consider the following 317-residue polypeptide: Beta-sarcoglycan (317 aa).

The tract at residues 1–31 (MAAAAAATEQQSSNGPVKKSMREKAVERRNV) is disordered. At 1 to 64 (MAAAAAATEQ…GLRGRKGNLA (64 aa)) the chain is on the cytoplasmic side. Basic and acidic residues predominate over residues 20-31 (SMREKAVERRNV). Residues 65–85 (ICVIVLLFILAVINLIITLVI) form a helical; Signal-anchor for type II membrane protein membrane-spanning segment. The Extracellular portion of the chain corresponds to 86-317 (WAVIRIGPNG…TSDNPCGDLY (232 aa)). N-linked (GlcNAc...) asparagine glycans are attached at residues Asn-157, Asn-210, and Asn-257. Intrachain disulfides connect Cys-287/Cys-313 and Cys-289/Cys-306.

This sequence belongs to the sarcoglycan beta/delta/gamma/zeta family. As to quaternary structure, cross-link to form 2 major subcomplexes: one consisting of SGCB, SGCD and SGCG and the other consisting of SGCB and SGCD. The association between SGCB and SGCG is particularly strong while SGCA is loosely associated with the other sarcoglycans. Post-translationally, disulfide bonds are present.

Its subcellular location is the cell membrane. The protein localises to the sarcolemma. It is found in the cytoplasm. The protein resides in the cytoskeleton. Its function is as follows. Component of the sarcoglycan complex, a subcomplex of the dystrophin-glycoprotein complex which forms a link between the F-actin cytoskeleton and the extracellular matrix. This Bos taurus (Bovine) protein is Beta-sarcoglycan (SGCB).